Consider the following 153-residue polypeptide: uncharacterized protein (153 aa).

Residue Ala2 is modified to N-acetylalanine.

This is an uncharacterized protein from Arabidopsis thaliana (Mouse-ear cress).